The chain runs to 328 residues: D-cysteine desulfhydrase (328 aa).

K51 is modified (N6-(pyridoxal phosphate)lysine).

This sequence belongs to the ACC deaminase/D-cysteine desulfhydrase family. As to quaternary structure, homodimer. Pyridoxal 5'-phosphate is required as a cofactor.

It carries out the reaction D-cysteine + H2O = hydrogen sulfide + pyruvate + NH4(+) + H(+). Catalyzes the alpha,beta-elimination reaction of D-cysteine and of several D-cysteine derivatives. It could be a defense mechanism against D-cysteine. The chain is D-cysteine desulfhydrase from Salmonella paratyphi C (strain RKS4594).